A 445-amino-acid polypeptide reads, in one-letter code: MNATEMENVSIRRLDSSDPRFAQALREVLAFEAGEDEAIDRAVAQILADVKDRGDAAVLEYTQRFDRVEAASMGALEISQSELEAALEDLEPKRRAALEAAAARVRAYHEKQKIECGSHSWEYTEADGTMLGQKVTPLDRVGIYVPGGKAAYPSSVLMNAIPARVAGVKEIIMVVPTPGGVRNELVLAAAQIAGVDRVFTIGGAQAVGALAYGTATLPQVDKIVGPGNAYVAAAKRRVFGTVGIDMIAGPSEILVICDGTTDPDWVAMDLFSQAEHDELAQSILLCPDADYIAQVEASIQRQLDSMPRREVIAASISGRGALIKVRDMEEACEIANAIAPEHLEISAENPRQWSEKIRHAGAIFLGRYTSESLGDYCAGPNHVLPTSRTARFSSPLGVYDFQKRSSLIEVSEGGAQMLGQIAAELAYGEGLQAHARSAEYRFKRS.

3 residues coordinate NAD(+): Y144, Q205, and N228. Residues S251, Q273, and H276 each coordinate substrate. 2 residues coordinate Zn(2+): Q273 and H276. Active-site proton acceptor residues include E341 and H342. Substrate-binding residues include H342, D375, E429, and H434. D375 lines the Zn(2+) pocket. A Zn(2+)-binding site is contributed by H434.

It belongs to the histidinol dehydrogenase family. The cofactor is Zn(2+).

The catalysed reaction is L-histidinol + 2 NAD(+) + H2O = L-histidine + 2 NADH + 3 H(+). It participates in amino-acid biosynthesis; L-histidine biosynthesis; L-histidine from 5-phospho-alpha-D-ribose 1-diphosphate: step 9/9. Its function is as follows. Catalyzes the sequential NAD-dependent oxidations of L-histidinol to L-histidinaldehyde and then to L-histidine. The sequence is that of Histidinol dehydrogenase from Cupriavidus pinatubonensis (strain JMP 134 / LMG 1197) (Cupriavidus necator (strain JMP 134)).